Here is a 324-residue protein sequence, read N- to C-terminus: Germination protease (324 aa).

Residues 1–10 (MIIVLGIRTD) constitute a propeptide that is removed on maturation.

This sequence belongs to the peptidase A25 family. As to quaternary structure, homotetramer. Autoproteolytically processed. The inactive tetrameric zymogen termed p46 autoprocesses to a smaller form termed p41, which is active only during spore germination.

The catalysed reaction is Endopeptidase action with P4 Glu or Asp, P1 preferably Glu &gt; Asp, P1' hydrophobic and P2' Ala.. Initiates the rapid degradation of small, acid-soluble proteins during spore germination. This chain is Germination protease, found in Caldanaerobacter subterraneus subsp. tengcongensis (strain DSM 15242 / JCM 11007 / NBRC 100824 / MB4) (Thermoanaerobacter tengcongensis).